Reading from the N-terminus, the 487-residue chain is MGEPDPLVSGQLAARRSWCLRRLGMDREWLQLEAGSEVTIGRGFSVTYQLISKVCPLMISRNHCVLKQNPEGQWTIMDNKSLNGVWLNRERLAPLQGYCIRKGDHIQLGVPLESKEHAEYEYEVIEEDRESLAPCLAPKNDHTTEKHKGLRTKRKFSSDGVESLPAEGPSDLRCPLAKGSSKPAEPEKLHGKGEAASQPLGCLCPTLASLEASERTAGPHACSTLPKVLELYPKKQKACSPSASQSSLELFKMTMSRMLKLKTQMQEKQIAVLNVKRQARKGSSKKVVRMEKELRDLQSQLYAEQAQQQARVEQLEKTFQEEEQHLQGLEKEQGECDLKQQLLQALQEHRALMEELDRSKKDFEKIIQAKNKELERTKEEKDKVQAQKEEVLSHMNDVLENELQCIICSEYFIEAVTLNCAHSFCSFCISEWMKRKVECPICRKDIESRTNSLVLDNCISKMVERLSSDVKERRSVLIRERRAKRLL.

Residues 38-92 enclose the FHA domain; the sequence is VTIGRGFSVTYQLISKVCPLMISRNHCVLKQNPEGQWTIMDNKSLNGVWLNRERL. The required for interaction with PIWIL1 stretch occupies residues 68–72; sequence QNPEG. The tract at residues 135 to 195 is disordered; it reads CLAPKNDHTT…PEKLHGKGEA (61 aa). Ser157 bears the Phosphoserine mark. Over residues 184 to 193 the composition is skewed to basic and acidic residues; the sequence is AEPEKLHGKG. The RING-type zinc finger occupies 405 to 443; the sequence is CIICSEYFIEAVTLNCAHSFCSFCISEWMKRKVECPICR.

It belongs to the RNF8 family. Homodimer. Forms a E2-E3 ubiquitin ligase complex composed of the RNF8 homodimer and a E2 heterodimer of UBE2N and UBE2V2. Interacts with class III E2s, including UBE2E1, UBE2E2, and UBE2E3 and with UBE2N. Interacts with RXRA. Interacts (via FHA domain) with phosphorylated HERC2 (via C-terminus). Interacts with PIWIL1; leading to sequester RNF8 in the cytoplasm. Interacts with WRAP53/TCAB1. In terms of processing, autoubiquitinated through 'Lys-48' and 'Lys-63' of ubiquitin. 'Lys-63' polyubiquitination is mediated by UBE2N. 'Lys-29'-type polyubiquitination is also observed, but it doesn't require its own functional RING-type zinc finger.

The protein localises to the nucleus. Its subcellular location is the cytoplasm. It is found in the midbody. The protein resides in the chromosome. It localises to the telomere. It carries out the reaction S-ubiquitinyl-[E2 ubiquitin-conjugating enzyme]-L-cysteine + [acceptor protein]-L-lysine = [E2 ubiquitin-conjugating enzyme]-L-cysteine + N(6)-ubiquitinyl-[acceptor protein]-L-lysine.. Its pathway is protein modification; protein ubiquitination. In terms of biological role, E3 ubiquitin-protein ligase that plays a key role in DNA damage signaling via 2 distinct roles: by mediating the 'Lys-63'-linked ubiquitination of histones H2A and H2AX and promoting the recruitment of DNA repair proteins at double-strand breaks (DSBs) sites, and by catalyzing 'Lys-48'-linked ubiquitination to remove target proteins from DNA damage sites. Following DNA DSBs, it is recruited to the sites of damage by ATM-phosphorylated MDC1 and catalyzes the 'Lys-63'-linked ubiquitination of histones H2A and H2AX, thereby promoting the formation of TP53BP1 and BRCA1 ionizing radiation-induced foci (IRIF). Also controls the recruitment of UIMC1-BRCC3 (RAP80-BRCC36) and PAXIP1/PTIP to DNA damage sites. Promotes the recruitment of NBN to DNA damage sites by catalyzing 'Lys-6'-linked ubiquitination of NBN. Also recruited at DNA interstrand cross-links (ICLs) sites and catalyzes 'Lys-63'-linked ubiquitination of histones H2A and H2AX, leading to recruitment of FAAP20 and Fanconi anemia (FA) complex, followed by interstrand cross-link repair. H2A ubiquitination also mediates the ATM-dependent transcriptional silencing at regions flanking DSBs in cis, a mechanism to avoid collision between transcription and repair intermediates. Promotes the formation of 'Lys-63'-linked polyubiquitin chains via interactions with the specific ubiquitin-conjugating UBE2N/UBC13 and ubiquitinates non-histone substrates such as PCNA. Substrates that are polyubiquitinated at 'Lys-63' are usually not targeted for degradation. Also catalyzes the formation of 'Lys-48'-linked polyubiquitin chains via interaction with the ubiquitin-conjugating UBE2L6/UBCH8, leading to degradation of substrate proteins such as CHEK2, JMJD2A/KDM4A and KU80/XRCC5: it is still unclear how the preference toward 'Lys-48'- versus 'Lys-63'-linked ubiquitination is regulated but it could be due to RNF8 ability to interact with specific E2 specific ligases. For instance, interaction with phosphorylated HERC2 promotes the association between RNF8 and UBE2N/UBC13 and favors the specific formation of 'Lys-63'-linked ubiquitin chains. Promotes non-homologous end joining (NHEJ) by promoting the 'Lys-48'-linked ubiquitination and degradation the of KU80/XRCC5. Following DNA damage, mediates the ubiquitination and degradation of JMJD2A/KDM4A in collaboration with RNF168, leading to unmask H4K20me2 mark and promote the recruitment of TP53BP1 at DNA damage sites. Following DNA damage, mediates the ubiquitination and degradation of POLD4/p12, a subunit of DNA polymerase delta. In the absence of POLD4, DNA polymerase delta complex exhibits higher proofreading activity. In addition to its function in damage signaling, also plays a role in higher-order chromatin structure by mediating extensive chromatin decondensation. Involved in the activation of ATM by promoting histone H2B ubiquitination, which indirectly triggers histone H4 'Lys-16' acetylation (H4K16ac), establishing a chromatin environment that promotes efficient activation of ATM kinase. Required in the testis, where it plays a role in the replacement of histones during spermatogenesis. At uncapped telomeres, promotes the joining of deprotected chromosome ends by inducing H2A ubiquitination and TP53BP1 recruitment, suggesting that it may enhance cancer development by aggravating telomere-induced genome instability in case of telomeric crisis. Promotes the assembly of RAD51 at DNA DSBs in the absence of BRCA1 and TP53BP1 Also involved in class switch recombination in immune system, via its role in regulation of DSBs repair. May be required for proper exit from mitosis after spindle checkpoint activation and may regulate cytokinesis. May play a role in the regulation of RXRA-mediated transcriptional activity. Not involved in RXRA ubiquitination by UBE2E2. The protein is E3 ubiquitin-protein ligase RNF8 of Rattus norvegicus (Rat).